A 31-amino-acid polypeptide reads, in one-letter code: Cycloviolacin-O25 (31 aa).

The cyclopeptide (Asp-Asn) cross-link spans 1–31 (DIFCGETCAFIPCITHVPGTCSCKSKVCYFN). 3 disulfide bridges follow: C4–C21, C8–C23, and C13–C28.

In terms of processing, this is a cyclic peptide. As to expression, expressed in roots and runners but not in leaves, petals and petioles (at protein level).

Probably participates in a plant defense mechanism. This chain is Cycloviolacin-O25, found in Viola odorata (Sweet violet).